The sequence spans 135 residues: Large ribosomal subunit protein mL61 (135 aa).

Residues 114-129 (HHESSPENIKEAHKQD) show a composition bias toward basic and acidic residues. The tract at residues 114-135 (HHESSPENIKEAHKQDYSPPSN) is disordered.

The protein belongs to the mitochondrion-specific ribosomal protein mL61 family. In terms of assembly, component of the mitochondrial large ribosomal subunit (mt-LSU). Mature yeast 74S mitochondrial ribosomes consist of a small (37S) and a large (54S) subunit. The 37S small subunit contains a 15S ribosomal RNA (15S mt-rRNA) and at least 32 different proteins. The 54S large subunit contains a 21S rRNA (21S mt-rRNA) and at least 45 different proteins.

It is found in the mitochondrion. Component of the mitochondrial ribosome (mitoribosome), a dedicated translation machinery responsible for the synthesis of mitochondrial genome-encoded proteins, including at least some of the essential transmembrane subunits of the mitochondrial respiratory chain. The mitoribosomes are attached to the mitochondrial inner membrane and translation products are cotranslationally integrated into the membrane. mL61 is not essential in cells grown at 30 degrees Celsius but is required for mitochondrial translation in cells grown at 18 degrees Celsius. This is Large ribosomal subunit protein mL61 (mrp49) from Schizosaccharomyces pombe (strain 972 / ATCC 24843) (Fission yeast).